Reading from the N-terminus, the 101-residue chain is Phosphoprotein OPG062 (101 aa).

Positions 51-73 (PSSPACERRPSSPSRCERMNNPG) are disordered. A phosphoserine mark is found at Ser-53 and Ser-62. A compositionally biased stretch (basic and acidic residues) spans 56–68 (CERRPSSPSRCER).

The protein belongs to the orthopoxvirus OPG062 family. In terms of assembly, self-associates to form high molecular-weight forms. Interacts with protein OPG157. Interacts with host RICTOR and RPTOR; these interactions disrupt the mTORC1 and mTORC2 crosstalk. Post-translationally, phosphorylated on two serines. While these phosphorylations do not play a role in virion assembly; they are essential for the interaction with host RICTOR and RPTOR.

The protein localises to the virion. Functionally, plays an essential role in virion assembly and morphogenesis. Also plays a role in the inhibition of host immune response by dysregulating mTOR. Sequesters host RICTOR and RPTOR, thereby disrupting mTORC1 and mTORC2 crosstalk. In turn, blocks the host antiviral response in part through mTOR-dependent degradation of cGAS, the primary poxvirus sensor. The chain is Phosphoprotein OPG062 (OPG062) from Homo sapiens (Human).